The chain runs to 487 residues: GTPase Der (487 aa).

2 consecutive EngA-type G domains span residues 3–167 (FTLA…EGFA) and 203–378 (LQIA…DIWN). GTP contacts are provided by residues 9 to 16 (GRPNVGKS), 56 to 60 (DTAGL), 119 to 122 (NKAE), 209 to 216 (GRPNAGKS), 256 to 260 (DTAGM), and 321 to 324 (NKWD). The KH-like domain occupies 379-463 (RRITTARLNT…PIRLTMRGQG (85 aa)). The interval 451-487 (PGTPIRLTMRGQGDKNPFKERKFRTPSRLRKHLGKKD) is disordered. The span at 471-487 (RKFRTPSRLRKHLGKKD) shows a compositional bias: basic residues.

It belongs to the TRAFAC class TrmE-Era-EngA-EngB-Septin-like GTPase superfamily. EngA (Der) GTPase family. As to quaternary structure, associates with the 50S ribosomal subunit.

GTPase that plays an essential role in the late steps of ribosome biogenesis. This is GTPase Der from Cereibacter sphaeroides (strain ATCC 17029 / ATH 2.4.9) (Rhodobacter sphaeroides).